A 146-amino-acid chain; its full sequence is UPF0735 ACT domain-containing protein Cphy_3604 (146 aa).

Residues Thr70–Arg145 form the ACT domain.

It belongs to the UPF0735 family.

In Lachnoclostridium phytofermentans (strain ATCC 700394 / DSM 18823 / ISDg) (Clostridium phytofermentans), this protein is UPF0735 ACT domain-containing protein Cphy_3604.